The following is a 182-amino-acid chain: uncharacterized protein (182 aa).

Belongs to the mimivirus L28/L54 family.

This is an uncharacterized protein from Acanthamoeba polyphaga (Amoeba).